Consider the following 359-residue polypeptide: DNA replication and repair protein RecF (359 aa).

Residue Gly-30 to Thr-37 participates in ATP binding.

It belongs to the RecF family.

It is found in the cytoplasm. In terms of biological role, the RecF protein is involved in DNA metabolism; it is required for DNA replication and normal SOS inducibility. RecF binds preferentially to single-stranded, linear DNA. It also seems to bind ATP. The chain is DNA replication and repair protein RecF from Aliivibrio fischeri (strain ATCC 700601 / ES114) (Vibrio fischeri).